The following is a 345-amino-acid chain: Type II restriction enzyme HgiCI (345 aa).

It carries out the reaction Endonucleolytic cleavage of DNA to give specific double-stranded fragments with terminal 5'-phosphates.. A P subtype restriction enzyme that recognizes the double-stranded sequence 5'-GGYRCC-3' and cleaves after G-1. The chain is Type II restriction enzyme HgiCI (hgiCIR) from Herpetosiphon aurantiacus (Herpetosiphon giganteus).